A 180-amino-acid chain; its full sequence is UPF0227 protein Shew_1627 (180 aa).

It belongs to the UPF0227 family.

The sequence is that of UPF0227 protein Shew_1627 from Shewanella loihica (strain ATCC BAA-1088 / PV-4).